Reading from the N-terminus, the 709-residue chain is Kelch-like protein 11 (709 aa).

Positions 1–15 (MAAAVAAAAAAAAAA) are cleaved as a signal peptide. Residues 95–171 (CDITLCFGGA…MYTGRIRVST (77 aa)) enclose the BTB domain. In terms of domain architecture, BACK spans 206–308 (CVAIHSLAHM…KPTYLTRHVK (103 aa)). Kelch repeat units lie at residues 361–408 (VIMV…ITES), 409–454 (YVYV…EVKG), 456–502 (LYSI…AIED), 504–557 (FVYI…VVNS), and 611–662 (DVFI…HVRI). S466 is modified (phosphoserine).

Homodimer. Interacts with CUL3. Component of a cullin-RING-based BCR (BTB-CUL3-RBX1) E3 ubiquitin-protein ligase complex.

In terms of biological role, component of a cullin-RING-based BCR (BTB-CUL3-RBX1) E3 ubiquitin-protein ligase complex that mediates the ubiquitination of target proteins, leading most often to their proteasomal degradation. This chain is Kelch-like protein 11 (Klhl11), found in Mus musculus (Mouse).